A 119-amino-acid chain; its full sequence is MHDFCFTIPYGILLIVGGFIGYLKKGSIASLAGGAGTGLLVVLAGFISLKAFEKKKTSLLATLLETVIAAALTFVMGQRFLQTQKIMPAALVAGISALMTCFYVYKIATGGNHIPPKAE.

A run of 3 helical transmembrane segments spans residues 27 to 47 (SIAS…AGFI), 57 to 77 (TSLL…FVMG), and 85 to 105 (KIMP…FYVY).

The protein belongs to the TMEM14 family.

The protein localises to the membrane. May be involved in free fatty acids export. This Arabidopsis thaliana (Mouse-ear cress) protein is Protein FATTY ACID EXPORT 5.